The following is a 627-amino-acid chain: Glutamine--fructose-6-phosphate aminotransferase [isomerizing] (627 aa).

The active-site Nucleophile; for GATase activity is cysteine 2. A Glutamine amidotransferase type-2 domain is found at 2–224 (CGIVGYIGTQ…NGEIARLTPL (223 aa)). SIS domains follow at residues 293 to 442 (LPEN…HRQT) and 476 to 617 (LAHE…VDQP). Lysine 622 functions as the For Fru-6P isomerization activity in the catalytic mechanism.

As to quaternary structure, homodimer.

The protein localises to the cytoplasm. It carries out the reaction D-fructose 6-phosphate + L-glutamine = D-glucosamine 6-phosphate + L-glutamate. Functionally, catalyzes the first step in hexosamine metabolism, converting fructose-6P into glucosamine-6P using glutamine as a nitrogen source. The protein is Glutamine--fructose-6-phosphate aminotransferase [isomerizing] of Nostoc sp. (strain PCC 9229).